A 417-amino-acid polypeptide reads, in one-letter code: MRVVILGSGVVGVSTAWYLAQAGHDVTVIDRQPEPALETSAGNAGQISPGYAAPWAAPGIPLKAIKWMFQRHAPLAIRPDFTTAQLCWMWQMLLNCDARHYKTNKARMVRLAEYSRDCLQQLRRDTGIQYEGRQGGTLQLFRTEQQYDNATRDIAVLEEAGVPYQLLARHELASVEPALANIVGTLTGGLRLPHDETGDCQLFTRQLAAMAAEAGVTFKLGRNVRQLRVEGQSVTGVQCDDEMIVADAYVMACGSYSTGLLRQWFDIPVYPLKGYSLTIPLADDASAPVSTVLDETYKVAITRFDNRIRVGGMAEVVGFNTDLNPKRRETLEMVVRDLYPHCGPIEQATFWTGLRPMTPDGTPLVGRSPLKNLYLNTGHGTLGWTMACGSGKLLADILSDKSPEIEADDLSVSRYTR.

An FAD-binding site is contributed by 3–17; the sequence is VVILGSGVVGVSTAW.

The protein belongs to the DadA oxidoreductase family. FAD is required as a cofactor.

The catalysed reaction is a D-alpha-amino acid + A + H2O = a 2-oxocarboxylate + AH2 + NH4(+). It functions in the pathway amino-acid degradation; D-alanine degradation; NH(3) and pyruvate from D-alanine: step 1/1. In terms of biological role, oxidative deamination of D-amino acids. This chain is D-amino acid dehydrogenase, found in Pectobacterium atrosepticum (strain SCRI 1043 / ATCC BAA-672) (Erwinia carotovora subsp. atroseptica).